The sequence spans 450 residues: Probable ECA polymerase (450 aa).

A run of 11 helical transmembrane segments spans residues 6 to 26 (FSGLFVVWLLCTLFIATLTWF), 37 to 57 (VFFSLLFLLTFFFGFPLTSVL), 63 to 83 (VGVAPPEILLQALLSAGCFYA), 118 to 138 (VILMGIALVSVGIFFMHNGFL), 155 to 175 (GVALKRFFYFFIPAMLVVYFL), 181 to 201 (AWLFFLVSTVAFGLLTYMIVG), 207 to 227 (IIIAFAIFLFIGIIRGWISLW), 228 to 248 (MLAAAGVLGIVGMFWLALKRY), 341 to 361 (LVVMGGALFIPLGAIVVGLII), 378 to 398 (YKAAILHSFCFGAIFNMIVLA), and 410 to 430 (VFFIVVFGACLMIAKLLYWLF).

It belongs to the WzyE family. In terms of assembly, probably part of a complex composed of WzxE, WzyE and WzzE.

The protein localises to the cell inner membrane. Its pathway is bacterial outer membrane biogenesis; enterobacterial common antigen biosynthesis. Functionally, probably involved in the polymerization of enterobacterial common antigen (ECA) trisaccharide repeat units. This is Probable ECA polymerase from Escherichia coli O139:H28 (strain E24377A / ETEC).